We begin with the raw amino-acid sequence, 673 residues long: G-protein-signaling modulator 1 (673 aa).

Residues 1-507 form a mediates association with membranes region; it reads MASPAPPVAE…DLLSKFQSSR (507 aa). TPR repeat units follow at residues 28–61, 66–99, 106–139, 146–178, 180–199, 206–239, 246–279, 286–319, and 326–359; these read CLELALEGERLCKAGDFKAGVAFFEAAVQVGTED, SAIYSQLGNAYFYLKEYARALQFHKHDLLLARTI, AKASGNLGNTLKVLGRFDEAIVCCQRHLDIAQEQ, ARALYNIGNVYHAKGKQLSWNAAQDPGHLPPDV, ETLHRASEFYERNLSLVKEL, GRAYGNLGNTHYLLGNFTEATTFHKERLAIAKEF, RRAYSNLGNAHIFLGRFDVAAEHYKKTLQLSRQL, AQACYSLGNTYTLLQDYERAAEYHLRHLVIAQEL, and GRACWSLGNAYVSMGSPAQALTFAKKHLQISQEI. Positions 361–485 are interaction with STK11/LKB1; the sequence is DRNGELTARM…VRVQVPRTGI (125 aa). A Phosphoserine modification is found at serine 410. Arginine 418 bears the Omega-N-methylarginine mark. Basic and acidic residues predominate over residues 420–439; that stretch reads PLDREQNGETHHTGDWRGPG. The disordered stretch occupies residues 420-475; the sequence is PLDREQNGETHHTGDWRGPGRDSLPLPMRSRKYQEGPDAIERRPREGSHSPLDSAD. 5 positions are modified to phosphoserine: serine 442, serine 467, serine 469, serine 490, and serine 491. The span at 451–467 shows a compositional bias: basic and acidic residues; that stretch reads KYQEGPDAIERRPREGS. The GoLoco 1 domain occupies 493 to 515; it reads EECFFDLLSKFQSSRMDDQRCPL. The interval 508-531 is disordered; the sequence is MDDQRCPLEEGQAGAAEATAAPSV. Residues 516–528 show a composition bias toward low complexity; sequence EEGQAGAAEATAA. Residues serine 543 and serine 567 each carry the phosphoserine modification. GoLoco domains follow at residues 546 to 568, 594 to 616, and 628 to 650; these read TEEFFDLIASSQSRRLDDQRASV, GDEFFNMLIKYQSSRIDDQRCPP, and DEDFFSLIQRVQAKRMDEQRVDL. The interval 644–673 is disordered; sequence DEQRVDLAGSPEQEASGLPDPQQQCPPGAS. The residue at position 653 (serine 653) is a Phosphoserine. The span at 664 to 673 shows a compositional bias: polar residues; sequence PQQQCPPGAS.

The protein belongs to the GPSM family. Interacts with GNAI1 and GNAI2 preferentially in their GDP-bound state. May also interact with GNAO1. Interacts with INSC/inscuteable and FRMPD1. Interacts with GNAI3. Interacts with STK11/LKB1 and MACF1. Phosphorylation regulates interaction with G(i/o) alpha. In terms of tissue distribution, expressed in neural progenitor cells (at protein level).

The protein localises to the cytoplasm. Its subcellular location is the cytosol. It is found in the endoplasmic reticulum membrane. The protein resides in the golgi apparatus membrane. It localises to the cell membrane. Guanine nucleotide dissociation inhibitor (GDI) which functions as a receptor-independent activator of heterotrimeric G-protein signaling. Keeps G(i/o) alpha subunit in its GDP-bound form thus uncoupling heterotrimeric G-proteins signaling from G protein-coupled receptors. Controls spindle orientation and asymmetric cell fate of cerebral cortical progenitors. May also be involved in macroautophagy in intestinal cells. May play a role in drug addiction. The sequence is that of G-protein-signaling modulator 1 (Gpsm1) from Mus musculus (Mouse).